The primary structure comprises 500 residues: L-arabinose isomerase (500 aa).

The Mn(2+) site is built by Glu306, Glu333, His350, and His450.

This sequence belongs to the arabinose isomerase family. As to quaternary structure, homohexamer. Mn(2+) is required as a cofactor.

It carries out the reaction beta-L-arabinopyranose = L-ribulose. The protein operates within carbohydrate degradation; L-arabinose degradation via L-ribulose; D-xylulose 5-phosphate from L-arabinose (bacterial route): step 1/3. Its function is as follows. Catalyzes the conversion of L-arabinose to L-ribulose. This is L-arabinose isomerase from Enterobacter sp. (strain 638).